We begin with the raw amino-acid sequence, 228 residues long: Large ribosomal subunit protein uL3 (228 aa).

Residues 157–176 (CHRHAGGTGMSASPSRTFKG) are disordered.

Belongs to the universal ribosomal protein uL3 family. Part of the 50S ribosomal subunit. Forms a cluster with proteins L14 and L19.

Its function is as follows. One of the primary rRNA binding proteins, it binds directly near the 3'-end of the 23S rRNA, where it nucleates assembly of the 50S subunit. The protein is Large ribosomal subunit protein uL3 of Rhodopirellula baltica (strain DSM 10527 / NCIMB 13988 / SH1).